We begin with the raw amino-acid sequence, 1125 residues long: Tudor domain-containing protein 7 (1125 aa).

The HTH OST-type 1 domain occupies 3-76 (EADLVSKMLR…SGEITCYAMA (74 aa)). Residues 126-157 (PGFSSDFSVSKKPNPTLLRDKGNSLGVKSDAE) are disordered. Polar residues predominate over residues 127–138 (GFSSDFSVSKKP). In terms of domain architecture, HTH OST-type 2 spans 260–329 (KMDEVQNRIK…GQDLLLYPAK (70 aa)). Ser-346 carries the post-translational modification Phosphoserine. The HTH OST-type 3 domain maps to 364–433 (MPGDFKEKVA…PQKAILYAKL (70 aa)). Tudor domains follow at residues 540-597 (TVHV…FCSL) and 730-787 (LPFC…FLQE). The segment covering 881-895 (SSGTSSPNSKSGSTP) has biased composition (low complexity). Residues 881-904 (SSGTSSPNSKSGSTPVPGSTGDNF) are disordered. The residue at position 886 (Ser-886) is a Phosphoserine. The interaction with CDK17 stretch occupies residues 888–1125 (NSKSGSTPVP…EYLVELSKVN (238 aa)). Positions 920–1125 (TSSLSVEELP…EYLVELSKVN (206 aa)) are interaction with CABLES1.

Belongs to the TDRD7 family. Found in a mRNP complex, at least composed of TDRD1, TDRD6, TDRD7 and DDX4. Found in a complex containing CABLES1, CDK16 and CDK17. Interacts with CABLES1, CDK17 and PIWIL1.

Its subcellular location is the cytoplasm. Component of specific cytoplasmic RNA granules involved in post-transcriptional regulation of specific genes: probably acts by binding to specific mRNAs and regulating their translation. Required for lens transparency during lens development, by regulating translation of genes such as CRYBB3 and HSPB1 in the developing lens. Also required during spermatogenesis. This chain is Tudor domain-containing protein 7 (TDRD7), found in Canis lupus familiaris (Dog).